Consider the following 141-residue polypeptide: Galactose-6-phosphate isomerase subunit LacA (141 aa).

It belongs to the LacAB/RpiB family. In terms of assembly, heteromultimeric protein consisting of LacA and LacB.

The enzyme catalyses aldehydo-D-galactose 6-phosphate = keto-D-tagatose 6-phosphate. Its pathway is carbohydrate metabolism; D-galactose 6-phosphate degradation; D-tagatose 6-phosphate from D-galactose 6-phosphate: step 1/1. This Streptococcus pneumoniae serotype 4 (strain ATCC BAA-334 / TIGR4) protein is Galactose-6-phosphate isomerase subunit LacA.